The sequence spans 464 residues: Trigger factor (464 aa).

In terms of domain architecture, PPIase FKBP-type spans G169 to P256.

Belongs to the FKBP-type PPIase family. Tig subfamily.

It is found in the cytoplasm. It carries out the reaction [protein]-peptidylproline (omega=180) = [protein]-peptidylproline (omega=0). Its function is as follows. Involved in protein export. Acts as a chaperone by maintaining the newly synthesized protein in an open conformation. Functions as a peptidyl-prolyl cis-trans isomerase. This Microcystis aeruginosa (strain NIES-843 / IAM M-2473) protein is Trigger factor.